The primary structure comprises 445 residues: UPF0210 protein SPT_0285 (445 aa).

This sequence belongs to the UPF0210 family. As to quaternary structure, homodimer.

This Streptococcus pneumoniae (strain Taiwan19F-14) protein is UPF0210 protein SPT_0285.